A 608-amino-acid polypeptide reads, in one-letter code: Microtubule-associated protein VP7 (608 aa).

The protein resides in the virion. Its subcellular location is the host cytoplasm. It localises to the host cytoskeleton. In terms of biological role, minor inner capsid component. Displays NTPase and RNA 5'-triphosphatase (RTPase) activities. May function as a cofactor of polymerase. Associates with microtubules and plays a role in the formation, structural organization and morphology of viral inclusions, where the assembly of cores and the replication of viral RNA occur. The sequence is that of Microtubule-associated protein VP7 from Oryza latifolia (Indian wild rice).